A 259-amino-acid chain; its full sequence is Phosphate import ATP-binding protein PstB 1 (259 aa).

The ABC transporter domain occupies I13–I254. Residue G45 to S52 participates in ATP binding.

This sequence belongs to the ABC transporter superfamily. Phosphate importer (TC 3.A.1.7) family. As to quaternary structure, the complex is composed of two ATP-binding proteins (PstB), two transmembrane proteins (PstC and PstA) and a solute-binding protein (PstS).

Its subcellular location is the cell inner membrane. The catalysed reaction is phosphate(out) + ATP + H2O = ADP + 2 phosphate(in) + H(+). Part of the ABC transporter complex PstSACB involved in phosphate import. Responsible for energy coupling to the transport system. This chain is Phosphate import ATP-binding protein PstB 1, found in Pseudomonas savastanoi pv. phaseolicola (strain 1448A / Race 6) (Pseudomonas syringae pv. phaseolicola (strain 1448A / Race 6)).